The following is a 405-amino-acid chain: Probable tRNA sulfurtransferase (405 aa).

Residues 60–165 (TAVMDRLKGV…LNGVFLSGQT (106 aa)) enclose the THUMP domain. ATP-binding positions include 183–184 (ML), 208–209 (HF), arginine 265, glycine 287, and glutamine 296.

This sequence belongs to the ThiI family.

The protein localises to the cytoplasm. It carries out the reaction [ThiI sulfur-carrier protein]-S-sulfanyl-L-cysteine + a uridine in tRNA + 2 reduced [2Fe-2S]-[ferredoxin] + ATP + H(+) = [ThiI sulfur-carrier protein]-L-cysteine + a 4-thiouridine in tRNA + 2 oxidized [2Fe-2S]-[ferredoxin] + AMP + diphosphate. It catalyses the reaction [ThiS sulfur-carrier protein]-C-terminal Gly-Gly-AMP + S-sulfanyl-L-cysteinyl-[cysteine desulfurase] + AH2 = [ThiS sulfur-carrier protein]-C-terminal-Gly-aminoethanethioate + L-cysteinyl-[cysteine desulfurase] + A + AMP + 2 H(+). It participates in cofactor biosynthesis; thiamine diphosphate biosynthesis. In terms of biological role, catalyzes the ATP-dependent transfer of a sulfur to tRNA to produce 4-thiouridine in position 8 of tRNAs, which functions as a near-UV photosensor. Also catalyzes the transfer of sulfur to the sulfur carrier protein ThiS, forming ThiS-thiocarboxylate. This is a step in the synthesis of thiazole, in the thiamine biosynthesis pathway. The sulfur is donated as persulfide by IscS. The polypeptide is Probable tRNA sulfurtransferase (Levilactobacillus brevis (strain ATCC 367 / BCRC 12310 / CIP 105137 / JCM 1170 / LMG 11437 / NCIMB 947 / NCTC 947) (Lactobacillus brevis)).